We begin with the raw amino-acid sequence, 326 residues long: Putative ankyrin repeat protein L25 (326 aa).

ANK repeat units lie at residues 11–40 (RSEY…DLNV), 42–65 (KLFY…NIHV), 66–95 (DDEF…DIHV), 96–125 (NDDA…DIHA), 127–154 (NELV…DIHA), 155–184 (EDDE…NFRA), 185–214 (ENDY…DIHA), 216–244 (DEYA…DIHA), 246–274 (NDYG…NIHA), and 275–304 (KDDY…NIHA).

This chain is Putative ankyrin repeat protein L25, found in Acanthamoeba polyphaga mimivirus (APMV).